Reading from the N-terminus, the 108-residue chain is UPF0102 protein Shewana3_3881 (108 aa).

Belongs to the UPF0102 family.

The chain is UPF0102 protein Shewana3_3881 from Shewanella sp. (strain ANA-3).